The chain runs to 464 residues: 3-isopropylmalate dehydratase large subunit (464 aa).

[4Fe-4S] cluster is bound by residues cysteine 337, cysteine 397, and cysteine 400.

It belongs to the aconitase/IPM isomerase family. LeuC type 1 subfamily. Heterodimer of LeuC and LeuD. The cofactor is [4Fe-4S] cluster.

It catalyses the reaction (2R,3S)-3-isopropylmalate = (2S)-2-isopropylmalate. Its pathway is amino-acid biosynthesis; L-leucine biosynthesis; L-leucine from 3-methyl-2-oxobutanoate: step 2/4. In terms of biological role, catalyzes the isomerization between 2-isopropylmalate and 3-isopropylmalate, via the formation of 2-isopropylmaleate. In Bacillus cereus (strain ZK / E33L), this protein is 3-isopropylmalate dehydratase large subunit.